A 747-amino-acid chain; its full sequence is Sulfhydryl oxidase 1 (747 aa).

The signal sequence occupies residues 1–29 (MRRCNSGSGPPPSLLLLLLWLLAVPGANA). A Thioredoxin domain is found at 36–156 (YSPSDPLTLL…RERLIDALES (121 aa)). Residues Cys70 and Cys73 each act as nucleophile in the active site. 2 cysteine pairs are disulfide-bonded: Cys70–Cys73 and Cys101–Cys110. N-linked (GlcNAc...) (complex) asparagine glycosylation occurs at Asn130. Residue Asn243 is glycosylated (N-linked (GlcNAc...) asparagine). Cys393 and Cys405 form a disulfide bridge. Residues 396–503 (SEPHFRGFPC…EDPQFPKVQW (108 aa)) form the ERV/ALR sulfhydryl oxidase domain. Residues Arg401, Trp408, and His412 each contribute to the FAD site. Residue Ser426 is modified to Phosphoserine; by FAM20C. Cys449 and Cys452 are disulfide-bonded. Residues Asp451, His455, 478-485 (WSSHNRVN), Lys500, and Trp503 each bind FAD. Residues Cys509 and Cys512 are joined by a disulfide bond. The interval 573–633 (SRNSTLDPGK…HMAELQRNEQ (61 aa)) is disordered. Asn575 is a glycosylation site (N-linked (GlcNAc...) asparagine). A compositionally biased stretch (basic and acidic residues) spans 621–633 (PPEHMAELQRNEQ). Residues 710 to 730 (ISLCVGLYSLSFMGLLAMYTY) form a helical membrane-spanning segment.

Belongs to the quiescin-sulfhydryl oxidase (QSOX) family. Monomer. Requires FAD as cofactor. N-glycosylated. O-glycosylated on Thr and Ser residues. As to expression, expressed in heart, placenta, lung, liver, skeletal muscle, pancreas and very weakly in brain and kidney.

The protein resides in the golgi apparatus membrane. It localises to the secreted. The enzyme catalyses 2 R'C(R)SH + O2 = R'C(R)S-S(R)CR' + H2O2. Its function is as follows. Catalyzes the oxidation of sulfhydryl groups in peptide and protein thiols to disulfides with the reduction of oxygen to hydrogen peroxide. Plays a role in disulfide bond formation in a variety of extracellular proteins. In fibroblasts, required for normal incorporation of laminin into the extracellular matrix, and thereby for normal cell-cell adhesion and cell migration. The polypeptide is Sulfhydryl oxidase 1 (QSOX1) (Homo sapiens (Human)).